The primary structure comprises 279 residues: 2-dehydro-3-deoxyphosphooctonate aldolase (279 aa).

The protein belongs to the KdsA family.

The protein localises to the cytoplasm. It catalyses the reaction D-arabinose 5-phosphate + phosphoenolpyruvate + H2O = 3-deoxy-alpha-D-manno-2-octulosonate-8-phosphate + phosphate. It functions in the pathway carbohydrate biosynthesis; 3-deoxy-D-manno-octulosonate biosynthesis; 3-deoxy-D-manno-octulosonate from D-ribulose 5-phosphate: step 2/3. Its pathway is bacterial outer membrane biogenesis; lipopolysaccharide biosynthesis. The protein is 2-dehydro-3-deoxyphosphooctonate aldolase of Desulfosudis oleivorans (strain DSM 6200 / JCM 39069 / Hxd3) (Desulfococcus oleovorans).